The sequence spans 462 residues: MRILYLQNALNFTEEVVEIFGDLLNKGMNITELVARIKELTDKLGREAIEAIIEELDRIIKEDKRRKEKWVVERKDKKRLTTVLGDIEYERTYYKSKEDGRYTYLVDDALEIGRHDRIEKGVKIKLVENAIEESYERSSKKACPEELSKQTVLNAIREIGEVEVKREIKEKKEVRGLYIEADEDHVPLQDGRDETPRLVYIHEGREEKNGRNVLKNVYYKAYVGEKPEDIWIDVANYIEDNYKEEKIEKIYIAGDGAPWIKEGLEWIVKSRFVLDRYHLNKYVLKATSKEPKYRDKIWRAINEGDKEGVKKVFDELIKAAEEEREKEKIKEAKKYILNNWEGIKIYSEDEDVIGCSAEGHISHVFSARLSRNPLGWSREGLKLMAKLRVFSKNGGDLREVEWGKKKNINAGSYKLTKKQIKEAVRRVKTSTNEKINNITVLNIGKVTPIYRVLRALKYAQVI.

This sequence belongs to the UPF0236 family.

This Caldanaerobacter subterraneus subsp. tengcongensis (strain DSM 15242 / JCM 11007 / NBRC 100824 / MB4) (Thermoanaerobacter tengcongensis) protein is UPF0236 protein TTE2489.